We begin with the raw amino-acid sequence, 447 residues long: Argininosuccinate lyase (447 aa).

The protein belongs to the lyase 1 family. Argininosuccinate lyase subfamily.

It localises to the cytoplasm. It carries out the reaction 2-(N(omega)-L-arginino)succinate = fumarate + L-arginine. The protein operates within amino-acid biosynthesis; L-arginine biosynthesis; L-arginine from L-ornithine and carbamoyl phosphate: step 3/3. In Bacteroides fragilis (strain ATCC 25285 / DSM 2151 / CCUG 4856 / JCM 11019 / LMG 10263 / NCTC 9343 / Onslow / VPI 2553 / EN-2), this protein is Argininosuccinate lyase.